The primary structure comprises 520 residues: Cytochrome P450 315a1, mitochondrial (520 aa).

C466 provides a ligand contact to heme.

This sequence belongs to the cytochrome P450 family. The cofactor is heme. In terms of tissue distribution, complex coexpression pattern of dib (disembodied) and sad (shade) in the early embryo that restricts to the prothoracic gland cells of the developing ring gland during late embryogenesis. In larvae and adult, coexpression is seen in prothoracic gland and follicle cells of the ovary. In adults, coexpression is seen in the follicle cells, sad only is expressed in nurse cells.

It is found in the mitochondrion membrane. The enzyme catalyses 2-deoxyecdysone + 2 reduced [adrenodoxin] + O2 + 2 H(+) = ecdysone + 2 oxidized [adrenodoxin] + H2O. It catalyses the reaction 2,22-dideoxyecdysone + 2 reduced [adrenodoxin] + O2 + 2 H(+) = 22-deoxyecdysone + 2 oxidized [adrenodoxin] + H2O. Its pathway is steroid biosynthesis; ecdysteroid biosynthesis. Its function is as follows. Required for CNS development: midline glial cells. Involved in the metabolism of insect hormones: responsible for ecdysteroid C2-hydroxylase activity. May be involved in the breakdown of synthetic insecticides. The protein is Cytochrome P450 315a1, mitochondrial of Drosophila melanogaster (Fruit fly).